A 130-amino-acid polypeptide reads, in one-letter code: UPF0251 protein MmarC6_0272 (130 aa).

It belongs to the UPF0251 family.

This is UPF0251 protein MmarC6_0272 from Methanococcus maripaludis (strain C6 / ATCC BAA-1332).